The sequence spans 310 residues: Porphobilinogen deaminase (310 aa).

C242 carries the post-translational modification S-(dipyrrolylmethanemethyl)cysteine.

Belongs to the HMBS family. As to quaternary structure, monomer. The cofactor is dipyrromethane.

The enzyme catalyses 4 porphobilinogen + H2O = hydroxymethylbilane + 4 NH4(+). The protein operates within porphyrin-containing compound metabolism; protoporphyrin-IX biosynthesis; coproporphyrinogen-III from 5-aminolevulinate: step 2/4. In terms of biological role, tetrapolymerization of the monopyrrole PBG into the hydroxymethylbilane pre-uroporphyrinogen in several discrete steps. The protein is Porphobilinogen deaminase of Psychromonas ingrahamii (strain DSM 17664 / CCUG 51855 / 37).